The chain runs to 618 residues: DNA mismatch repair protein MutL (618 aa).

Over residues 366-381 (AEPTAAREPATPRYSG) the composition is skewed to low complexity. The disordered stretch occupies residues 366–405 (AEPTAAREPATPRYSGGTSGGNGGRQSAGGWPHAQPGYQK). Positions 382–392 (GTSGGNGGRQS) are enriched in gly residues.

This sequence belongs to the DNA mismatch repair MutL/HexB family.

Functionally, this protein is involved in the repair of mismatches in DNA. It is required for dam-dependent methyl-directed DNA mismatch repair. May act as a 'molecular matchmaker', a protein that promotes the formation of a stable complex between two or more DNA-binding proteins in an ATP-dependent manner without itself being part of a final effector complex. The sequence is that of DNA mismatch repair protein MutL from Salmonella agona (strain SL483).